Consider the following 302-residue polypeptide: Sulfate adenylyltransferase subunit 2 (302 aa).

Belongs to the PAPS reductase family. CysD subfamily. In terms of assembly, heterodimer composed of CysD, the smaller subunit, and CysN.

It catalyses the reaction sulfate + ATP + H(+) = adenosine 5'-phosphosulfate + diphosphate. Its pathway is sulfur metabolism; hydrogen sulfide biosynthesis; sulfite from sulfate: step 1/3. Functionally, with CysN forms the ATP sulfurylase (ATPS) that catalyzes the adenylation of sulfate producing adenosine 5'-phosphosulfate (APS) and diphosphate, the first enzymatic step in sulfur assimilation pathway. APS synthesis involves the formation of a high-energy phosphoric-sulfuric acid anhydride bond driven by GTP hydrolysis by CysN coupled to ATP hydrolysis by CysD. This Zymomonas mobilis subsp. mobilis (strain ATCC 31821 / ZM4 / CP4) protein is Sulfate adenylyltransferase subunit 2.